Consider the following 330-residue polypeptide: Ketol-acid reductoisomerase (NADP(+)) (330 aa).

The 181-residue stretch at 1–181 (MNVYYEQDAD…GGAKAGVIET (181 aa)) folds into the KARI N-terminal Rossmann domain. Residues 24 to 27 (YGSQ), Arg47, Ser50, Ser52, and 82 to 85 (DQYQ) each bind NADP(+). His107 is a catalytic residue. Position 133 (Gly133) interacts with NADP(+). In terms of domain architecture, KARI C-terminal knotted spans 182–327 (TIKDETETDL…AKLRNMMSWL (146 aa)). Residues Asp190, Glu194, Glu226, and Glu230 each coordinate Mg(2+). Ser251 lines the substrate pocket.

The protein belongs to the ketol-acid reductoisomerase family. Mg(2+) is required as a cofactor.

The enzyme catalyses (2R)-2,3-dihydroxy-3-methylbutanoate + NADP(+) = (2S)-2-acetolactate + NADPH + H(+). It catalyses the reaction (2R,3R)-2,3-dihydroxy-3-methylpentanoate + NADP(+) = (S)-2-ethyl-2-hydroxy-3-oxobutanoate + NADPH + H(+). It functions in the pathway amino-acid biosynthesis; L-isoleucine biosynthesis; L-isoleucine from 2-oxobutanoate: step 2/4. It participates in amino-acid biosynthesis; L-valine biosynthesis; L-valine from pyruvate: step 2/4. Its function is as follows. Involved in the biosynthesis of branched-chain amino acids (BCAA). Catalyzes an alkyl-migration followed by a ketol-acid reduction of (S)-2-acetolactate (S2AL) to yield (R)-2,3-dihydroxy-isovalerate. In the isomerase reaction, S2AL is rearranged via a Mg-dependent methyl migration to produce 3-hydroxy-3-methyl-2-ketobutyrate (HMKB). In the reductase reaction, this 2-ketoacid undergoes a metal-dependent reduction by NADPH to yield (R)-2,3-dihydroxy-isovalerate. This Prosthecochloris aestuarii (strain DSM 271 / SK 413) protein is Ketol-acid reductoisomerase (NADP(+)).